A 428-amino-acid chain; its full sequence is Putative zinc metalloprotease LL2128 (428 aa).

Residue histidine 19 coordinates Zn(2+). Glutamate 20 is an active-site residue. A Zn(2+)-binding site is contributed by histidine 23. Transmembrane regions (helical) follow at residues 188–210 (GPLNNFILGIIAFIVLTFVQGGV), 354–376 (IVYLLAMLSINLGIVNLFPIPVL), and 401–423 (IITMVGVVFMLVLFVAVTWNDIL). The PDZ domain occupies 188-282 (GPLNNFILGI…SETLSVTPKK (95 aa)).

It belongs to the peptidase M50B family. The cofactor is Zn(2+).

It is found in the cell membrane. This is Putative zinc metalloprotease LL2128 from Lactococcus lactis subsp. lactis (strain IL1403) (Streptococcus lactis).